The following is a 177-amino-acid chain: Peptide methionine sulfoxide reductase MsrA 2 (177 aa).

C12 is an active-site residue.

It belongs to the MsrA Met sulfoxide reductase family.

It carries out the reaction L-methionyl-[protein] + [thioredoxin]-disulfide + H2O = L-methionyl-(S)-S-oxide-[protein] + [thioredoxin]-dithiol. It catalyses the reaction [thioredoxin]-disulfide + L-methionine + H2O = L-methionine (S)-S-oxide + [thioredoxin]-dithiol. Functionally, has an important function as a repair enzyme for proteins that have been inactivated by oxidation. Catalyzes the reversible oxidation-reduction of methionine sulfoxide in proteins to methionine. This chain is Peptide methionine sulfoxide reductase MsrA 2 (msrA2), found in Staphylococcus aureus (strain NCTC 8325 / PS 47).